Reading from the N-terminus, the 285-residue chain is Probable endonuclease 4 (285 aa).

The Zn(2+) site is built by histidine 69, histidine 109, glutamate 145, aspartate 179, histidine 182, histidine 216, aspartate 229, histidine 231, and glutamate 261.

This sequence belongs to the AP endonuclease 2 family. Zn(2+) serves as cofactor.

The catalysed reaction is Endonucleolytic cleavage to 5'-phosphooligonucleotide end-products.. Functionally, endonuclease IV plays a role in DNA repair. It cleaves phosphodiester bonds at apurinic or apyrimidinic (AP) sites, generating a 3'-hydroxyl group and a 5'-terminal sugar phosphate. The sequence is that of Probable endonuclease 4 from Salmonella dublin (strain CT_02021853).